Reading from the N-terminus, the 274-residue chain is Secreted RxLR effector protein 40 (274 aa).

The N-terminal stretch at 1-21 is a signal peptide; the sequence is MRLYTQVVAASLVATLAIVDS. Positions 35–53 match the RxLR-dEER motif; the sequence is RFLRQDNATVARVSEDGER. N-linked (GlcNAc...) asparagine glycosylation is found at asparagine 41, asparagine 74, and asparagine 258.

Belongs to the RxLR effector family.

Its subcellular location is the secreted. It is found in the host nucleus. It localises to the host cytoplasm. Functionally, secreted effector that completely suppresses the host cell death induced by cell death-inducing proteins. This is Secreted RxLR effector protein 40 from Plasmopara viticola (Downy mildew of grapevine).